The primary structure comprises 97 residues: Large ribosomal subunit protein uL23 (97 aa).

It belongs to the universal ribosomal protein uL23 family. Part of the 50S ribosomal subunit. Contacts protein L29, and trigger factor when it is bound to the ribosome.

Its function is as follows. One of the early assembly proteins it binds 23S rRNA. One of the proteins that surrounds the polypeptide exit tunnel on the outside of the ribosome. Forms the main docking site for trigger factor binding to the ribosome. This is Large ribosomal subunit protein uL23 from Acidithiobacillus ferrooxidans (strain ATCC 23270 / DSM 14882 / CIP 104768 / NCIMB 8455) (Ferrobacillus ferrooxidans (strain ATCC 23270)).